The following is a 573-amino-acid chain: MKVLVTSAWPYVNSVPHLGNLIGSILSADVFARYARLKYGKENVLFVSGSDEHGTPIEIEAIKRKVNPKELTDQAHEYDKHLFLNVWKISFDNYTRTESETHKKFVREFLLKLTKYVKVSEDEIPFCEYDKLYLPDRFVKGTCPYCGFEDARGDQCDNCGKLLTPSLLVNPKCSICGKAPIFKKSKHWFFDLSEFNEKIRSWISSSNEMPDNVKSVALGWVSEGLKPRSITRDNKWGIPAPFIGAEDKSIYVWFEALLGYISAVIEYFEKKGEVEKWKEYWFSNDIKSYYFIGKDNIPFHVVILPAMLMASGEEYHLPDVIAATEYLLYEGQKFSKSRKIGVWIDEAPELMDVEYWRFVLIRLRPEEKDTNFTWRETVRIVNTELNDDIGNYVNRILSMLNRYYNGIVPEFRSDALDDNDKKTISLINEIPKIVGDLFEKGKLKAGTEEMLRFVRECNAYLNLKAPWDLYKAGKEVELNNTLYIGVNSVKTIAILLYPLMPSHAQEIYDMLNMGNIENEKWDIASKLSINYGHKIGKVKVLFKKLEPEFESKIKDKLEKIRKDIEKMRPTLLK.

Residues 10 to 20 (PYVNSVPHLGN) carry the 'HIGH' region motif. Positions 143, 146, 156, and 159 each coordinate Zn(2+). The 'KMSKS' region signature appears at 333–337 (KFSKS). K336 contributes to the ATP binding site.

This sequence belongs to the class-I aminoacyl-tRNA synthetase family. MetG type 1 subfamily. The cofactor is Zn(2+).

Its subcellular location is the cytoplasm. It carries out the reaction tRNA(Met) + L-methionine + ATP = L-methionyl-tRNA(Met) + AMP + diphosphate. Is required not only for elongation of protein synthesis but also for the initiation of all mRNA translation through initiator tRNA(fMet) aminoacylation. This Saccharolobus islandicus (strain M.14.25 / Kamchatka #1) (Sulfolobus islandicus) protein is Methionine--tRNA ligase.